Consider the following 410-residue polypeptide: Lissencephaly-1 homolog (410 aa).

Positions 7–39 (QRDELNRAIADYLRSNGYEEAYSVFKKEAELDM) constitute a LisH domain. Residues 56–82 (TSVIRLQKKVMELESKLNEAKEEFTSG) are a coiled coil. WD repeat units follow at residues 106–147 (GHRS…RTLK), 148–187 (GHTDSVQDISFDHSGKLLASCSADMTIKLWDFQGFECIRT), 190–229 (GHDHNVSSVAIMPNGDHIVSASRDKTIKMWEVQTGYCVKT), 232–271 (GHREWVRMVRPNQDGTLIASCSNDQTVRVWVVATKECKAE), 274–333 (EHEH…CLMT), 336–377 (GHDN…KTLN), and 379–410 (HEHFVTSLDFHKTAPYVVTGSVDQTVKVWECR).

Belongs to the WD repeat LIS1/nudF family. In terms of assembly, can self-associate. Component of the cytosolic PAF-AH (I) heterotetrameric enzyme, which is composed of PAFAH1B1 (beta), PAFAH1B2 (alpha2) and PAFAH1B3 (alpha1) subunits. The catalytic activity of the enzyme resides in the alpha1 (PAFAH1B3) and alpha2 (PAFAH1B2) subunits, whereas the beta subunit (PAFAH1B1) has regulatory activity. Trimer formation is not essential for the catalytic activity. Interacts with dynein, dynactin, nde1 and ndel1.

It localises to the cytoplasm. Its subcellular location is the cytoskeleton. It is found in the microtubule organizing center. The protein localises to the centrosome. In terms of biological role, regulatory subunit (beta subunit) of the cytosolic type I platelet-activating factor (PAF) acetylhydrolase (PAF-AH (I)), an enzyme that catalyzes the hydrolyze of the acetyl group at the sn-2 position of PAF and its analogs and participates in the PAF inactivation. Positively regulates the activity of the minus-end directed microtubule motor protein dynein. May enhance dynein-mediated microtubule sliding by targeting dynein to the microtubule plus end. Required for several dynein- and microtubule-dependent processes such as the maintenance of Golgi integrity, the peripheral transport of microtubule fragments and the coupling of the nucleus and centrosome. May be required for proliferation of neuronal precursors and neuronal migration. This is Lissencephaly-1 homolog (pafah1b1) from Xenopus tropicalis (Western clawed frog).